A 104-amino-acid chain; its full sequence is Large ribosomal subunit protein uL24 (104 aa).

The protein belongs to the universal ribosomal protein uL24 family. Part of the 50S ribosomal subunit.

One of two assembly initiator proteins, it binds directly to the 5'-end of the 23S rRNA, where it nucleates assembly of the 50S subunit. Its function is as follows. One of the proteins that surrounds the polypeptide exit tunnel on the outside of the subunit. This Aliivibrio fischeri (strain ATCC 700601 / ES114) (Vibrio fischeri) protein is Large ribosomal subunit protein uL24.